We begin with the raw amino-acid sequence, 192 residues long: Large ribosomal subunit protein uL18 (192 aa).

Belongs to the universal ribosomal protein uL18 family. In terms of assembly, part of the 50S ribosomal subunit. Contacts the 5S and 23S rRNAs.

In terms of biological role, this is one of the proteins that bind and probably mediate the attachment of the 5S RNA into the large ribosomal subunit, where it forms part of the central protuberance. This chain is Large ribosomal subunit protein uL18, found in Methanothermobacter thermautotrophicus (strain ATCC 29096 / DSM 1053 / JCM 10044 / NBRC 100330 / Delta H) (Methanobacterium thermoautotrophicum).